The sequence spans 972 residues: Mast/stem cell growth factor receptor Kit (972 aa).

Residues 1–25 form the signal peptide; sequence MRGARGAWDFLCVLLLLLRVQTGSS. Residues 26-520 are Extracellular-facing; that stretch reads QPSVSPEEAS…QIQPHTLFTP (495 aa). Ig-like C2-type domains lie at 27-112, 121-205, 212-308, 317-410, and 413-507; these read PSVS…VFVR, DRSL…LKVR, PVVS…LEVV, PMIN…VYVN, and PEIL…FNFA. Cysteines 58 and 97 form a disulfide. N-linked (GlcNAc...) asparagine glycans are attached at residues Asn130 and Asn145. 3 cysteine pairs are disulfide-bonded: Cys136–Cys186, Cys151–Cys183, and Cys233–Cys290. N-linked (GlcNAc...) asparagine glycans are attached at residues Asn283, Asn300, Asn320, Asn352, Asn367, Asn463, and Asn486. Cysteines 428 and 491 form a disulfide. Residues 521–541 form a helical membrane-spanning segment; the sequence is LLIGFVVVAGMMCIIVMILTY. Over 542-972 the chain is Cytoplasmic; the sequence is KYLQKPMYEV…SQPLLVRDDV (431 aa). Phosphotyrosine is present on residues Tyr543 and Tyr549. Residue Tyr564 participates in Mg(2+) binding. Phosphotyrosine; by autocatalysis is present on residues Tyr564 and Tyr566. The important for interaction with phosphotyrosine-binding proteins stretch occupies residues 564-566; it reads YVY. A Protein kinase domain is found at 585–933; sequence LSFGKTLGAG…ISESTNHIYS (349 aa). ATP contacts are provided by residues 592–599, Lys619, and 667–673; these read GAGAFGKV and EYCCYGD. 2 positions are modified to phosphotyrosine; by autocatalysis: Tyr699 and Tyr717. Position 726 is a phosphotyrosine (Tyr726). Residues Ser737 and Ser742 each carry the phosphoserine; by PKC/PRKCA modification. Catalysis depends on Asp788, which acts as the Proton acceptor. Arg792 lines the ATP pocket. Residues Asn793 and Asp806 each contribute to the Mg(2+) site. Phosphoserine is present on Ser817. A Phosphotyrosine; by autocatalysis modification is found at Tyr819. Phosphoserine is present on Ser887. Tyr896 carries the post-translational modification Phosphotyrosine. Tyr932 bears the Phosphotyrosine; by autocatalysis mark. Position 955 is a phosphoserine (Ser955).

This sequence belongs to the protein kinase superfamily. Tyr protein kinase family. CSF-1/PDGF receptor subfamily. In terms of assembly, monomer in the absence of bound KITLG/SCF. Homodimer in the presence of bound KITLG/SCF, forming a heterotetramer with two KITLG/SCF molecules. Interacts (via phosphorylated tyrosine residues) with the adapter proteins GRB2 and GRB7 (via SH2 domain), and SH2B2/APS. Interacts (via C-terminus) with MPDZ (via the tenth PDZ domain). Interacts (via phosphorylated tyrosine residues) with PIK3R1 and PIK3CD. Interacts (via phosphorylated tyrosine) with CRK (isoform Crk-II), FYN, SHC1 and MATK/CHK (via SH2 domain). Interacts with LYN and FES/FPS. Interacts (via phosphorylated tyrosine residues) with the protein phosphatases PTPN6/SHP-1 (via SH2 domain), PTPN11/SHP-2 (via SH2 domain) and PTPRU. Interacts with PLCG1. Interacts with DOK1 and TEC. Interacts with IL1RAP (independent of stimulation with KITLG/SCF). A mast cell-specific KITLG/SCF-induced interleukin-33 signaling complex contains IL1RL1, IL1RAP, KIT and MYD88. Ubiquitinated by SOCS6. KIT is rapidly ubiquitinated after autophosphorylation induced by KITLG/SCF binding, leading to internalization and degradation. In terms of processing, autophosphorylated on tyrosine residues. KITLG/SCF binding promotes autophosphorylation. Phosphorylated tyrosine residues are important for interaction with specific binding partners.

The protein localises to the cell membrane. It catalyses the reaction L-tyrosyl-[protein] + ATP = O-phospho-L-tyrosyl-[protein] + ADP + H(+). Present in an inactive conformation in the absence of bound ligand. KITLG/SCF binding leads to dimerization and activation by autophosphorylation on tyrosine residues. Activity is down-regulated by PRKCA-mediated phosphorylation on serine residues. Its function is as follows. Tyrosine-protein kinase that acts as a cell-surface receptor for the cytokine KITLG/SCF and plays an essential role in the regulation of cell survival and proliferation, hematopoiesis, stem cell maintenance, gametogenesis, mast cell development, migration and function, and in melanogenesis. In response to KITLG/SCF binding, KIT can activate several signaling pathways. Phosphorylates PIK3R1, PLCG1, SH2B2/APS and CBL. Activates the AKT1 signaling pathway by phosphorylation of PIK3R1, the regulatory subunit of phosphatidylinositol 3-kinase. Activated KIT also transmits signals via GRB2 and activation of RAS, RAF1 and the MAP kinases MAPK1/ERK2 and/or MAPK3/ERK1. Promotes activation of STAT family members STAT1, STAT3, STAT5A and STAT5B. Activation of PLCG1 leads to the production of the cellular signaling molecules diacylglycerol and inositol 1,4,5-trisphosphate. KIT signaling is modulated by protein phosphatases, and by rapid internalization and degradation of the receptor. Activated KIT promotes phosphorylation of the protein phosphatases PTPN6/SHP-1 and PTPRU, and of the transcription factors STAT1, STAT3, STAT5A and STAT5B. Promotes phosphorylation of PIK3R1, CBL, CRK (isoform Crk-II), LYN, MAPK1/ERK2 and/or MAPK3/ERK1, PLCG1, SRC and SHC1. This Callithrix jacchus (White-tufted-ear marmoset) protein is Mast/stem cell growth factor receptor Kit (KIT).